The sequence spans 454 residues: Aspartokinase 3 (454 aa).

ACT domains lie at 312–388 (ISKY…ALIM) and 389–454 (VVGE…VLIS).

The protein belongs to the aspartokinase family. Monomer.

The catalysed reaction is L-aspartate + ATP = 4-phospho-L-aspartate + ADP. It functions in the pathway amino-acid biosynthesis; L-lysine biosynthesis via DAP pathway; (S)-tetrahydrodipicolinate from L-aspartate: step 1/4. The protein operates within amino-acid biosynthesis; L-methionine biosynthesis via de novo pathway; L-homoserine from L-aspartate: step 1/3. It participates in amino-acid biosynthesis; L-threonine biosynthesis; L-threonine from L-aspartate: step 1/5. Its function is as follows. Catalyzes the phosphorylation of the beta-carboxyl group of aspartic acid with ATP to yield 4-phospho-L-aspartate, which is involved in the branched biosynthetic pathway leading to the biosynthesis of amino acids threonine, isoleucine and methionine. The chain is Aspartokinase 3 (yclM) from Bacillus subtilis (strain 168).